Here is a 462-residue protein sequence, read N- to C-terminus: Glycoprotein endo-alpha-1,2-mannosidase (462 aa).

Residues 1 to 9 (MAKFRRRTC) are Cytoplasmic-facing. Residues 10-30 (ILLSLFILFIFSLMMGLKMLW) traverse the membrane as a helical; Signal-anchor for type II membrane protein segment. Topologically, residues 31–462 (PNAASFGPPF…YALDQQQPAS (432 aa)) are lumenal. Positions 60-462 (DFQRSDRINM…YALDQQQPAS (403 aa)) are catalytic.

It belongs to the glycosyl hydrolase 99 family. In terms of processing, undergoes proteolytic cleavage in the C-terminal region.

It is found in the golgi apparatus membrane. The catalysed reaction is N-{alpha-Glc-(1-&gt;3)-alpha-Man-(1-&gt;2)-alpha-Man-(1-&gt;2)-alpha-Man-(1-&gt;3)-[alpha-Man-(1-&gt;2)-alpha-Man-(1-&gt;3)-[alpha-Man-(1-&gt;2)-alpha-Man-(1-&gt;6)]-alpha-Man-(1-&gt;6)]-beta-Man-(1-&gt;4)-beta-GlcNAc-(1-&gt;4)-beta-GlcNAc}-L-asparaginyl-[protein] + H2O = alpha-D-glucosyl-(1-&gt;3)-D-mannopyranose + N(4)-{alpha-D-Man-(1-&gt;2)-alpha-D-Man-(1-&gt;3)-[alpha-D-Man-(1-&gt;2)-alpha-D-Man-(1-&gt;3)-[alpha-D-Man-(1-&gt;2)-alpha-D-Man-(1-&gt;6)]-alpha-D-Man-(1-&gt;6)]-beta-D-Man-(1-&gt;4)-beta-D-GlaNAc-(1-&gt;4)-beta-D-GlcNAc}-L-asparaginyl-[protein] (N-glucan mannose isomer 8A1,2,3B1,2). The chain is Glycoprotein endo-alpha-1,2-mannosidase (Manea) from Mus musculus (Mouse).